The chain runs to 534 residues: SWI/SNF complex component SNF12 homolog (534 aa).

Residues 1–12 (MSGNNNNPQKPQ) show a composition bias toward polar residues. Disordered stretches follow at residues 1-33 (MSGNNNNPQKPQGSAPLPFGNPGMASASVPGNQ) and 78-132 (MTMN…SPMR). Low complexity predominate over residues 94-105 (PSSPSLTTPGSL). Residues 314 to 391 (YVPEKFKLST…SQKISHHLSP (78 aa)) form the SWIB/MDM2 domain.

The protein belongs to the SMARCD family. In terms of assembly, part of a SWI-SNF complex.

It is found in the nucleus. Its function is as follows. Involved in transcriptional activation and repression of select genes by chromatin remodeling (alteration of DNA-nucleosome topology). In Arabidopsis thaliana (Mouse-ear cress), this protein is SWI/SNF complex component SNF12 homolog.